We begin with the raw amino-acid sequence, 333 residues long: Beta-ketoacyl-[acyl-carrier-protein] synthase III (333 aa).

Catalysis depends on residues cysteine 117 and histidine 257. Residues 258–262 (QANLR) form an ACP-binding region. The active site involves asparagine 287.

This sequence belongs to the thiolase-like superfamily. FabH family. In terms of assembly, homodimer.

The protein resides in the cytoplasm. It catalyses the reaction malonyl-[ACP] + acetyl-CoA + H(+) = 3-oxobutanoyl-[ACP] + CO2 + CoA. It functions in the pathway lipid metabolism; fatty acid biosynthesis. Catalyzes the condensation reaction of fatty acid synthesis by the addition to an acyl acceptor of two carbons from malonyl-ACP. Catalyzes the first condensation reaction which initiates fatty acid synthesis and may therefore play a role in governing the total rate of fatty acid production. Possesses both acetoacetyl-ACP synthase and acetyl transacylase activities. Its substrate specificity determines the biosynthesis of branched-chain and/or straight-chain of fatty acids. The chain is Beta-ketoacyl-[acyl-carrier-protein] synthase III from Azobacteroides pseudotrichonymphae genomovar. CFP2.